The following is a 1116-amino-acid chain: Auxin response factor 21 (1116 aa).

Positions 132-234 (FCKTLTASDT…QLLLGIRRAN (103 aa)) form a DNA-binding region, TF-B3. The disordered stretch occupies residues 763–812 (KTDDVPSTSTSPSTNSNPVLLQSIPSSSKNQSLTTAGKTSQSSVVLGPTI). The span at 768-780 (PSTSTSPSTNSNP) shows a compositional bias: low complexity. Residues 781–806 (VLLQSIPSSSKNQSLTTAGKTSQSSV) are compositionally biased toward polar residues. Positions 998–1082 (RTYTKVHKRG…RCIRILSPQE (85 aa)) constitute a PB1 domain.

This sequence belongs to the ARF family. In terms of assembly, homodimers and heterodimers. In terms of tissue distribution, expressed in roots, culms, leaves and young panicles.

It is found in the nucleus. Functionally, auxin response factors (ARFs) are transcriptional factors that bind specifically to the DNA sequence 5'-TGTCTC-3' found in the auxin-responsive promoter elements (AuxREs). The protein is Auxin response factor 21 (ARF21) of Oryza sativa subsp. japonica (Rice).